Here is a 204-residue protein sequence, read N- to C-terminus: CASP-like protein 2U2 (204 aa).

Residues 1–36 (MGVLGGDAHVPIGSQVSPGSVVVTNNESFGHRKLLK) lie on the Cytoplasmic side of the membrane. A helical membrane pass occupies residues 37–57 (GVDFLVRIKAFAFCLAVIVLL). Residues 58-84 (KNNVQTTVIAPGIVLQAKYNNTKAPVS) are Extracellular-facing. The N-linked (GlcNAc...) asparagine glycan is linked to Asn77. Residues 85–105 (LLVLASICCGYAFLQAVVSLL) form a helical membrane-spanning segment. The Cytoplasmic segment spans residues 106 to 117 (SFIRDKRVLNNT). A helical membrane pass occupies residues 118-138 (VLAWLTFLLDQVLTYLLLGSA). Residues 139–170 (AATAEAAYIAKRGEDKVQWKAVCGPFKRFCDH) lie on the Extracellular side of the membrane. Residues 171-191 (FAATVFLSFIAVIAFAVSAAI) traverse the membrane as a helical segment. Residues 192–204 (SAYYLFRKSKGFK) lie on the Cytoplasmic side of the membrane.

This sequence belongs to the Casparian strip membrane proteins (CASP) family. Homodimer and heterodimers.

The protein resides in the cell membrane. The polypeptide is CASP-like protein 2U2 (Selaginella moellendorffii (Spikemoss)).